Consider the following 362-residue polypeptide: UDP-N-acetylglucosamine--N-acetylmuramyl-(pentapeptide) pyrophosphoryl-undecaprenol N-acetylglucosamine transferase (362 aa).

UDP-N-acetyl-alpha-D-glucosamine-binding positions include 10–12 (TAG), asparagine 124, arginine 161, serine 195, and glutamine 291.

This sequence belongs to the glycosyltransferase 28 family. MurG subfamily.

The protein localises to the cell membrane. It carries out the reaction di-trans,octa-cis-undecaprenyl diphospho-N-acetyl-alpha-D-muramoyl-L-alanyl-D-glutamyl-meso-2,6-diaminopimeloyl-D-alanyl-D-alanine + UDP-N-acetyl-alpha-D-glucosamine = di-trans,octa-cis-undecaprenyl diphospho-[N-acetyl-alpha-D-glucosaminyl-(1-&gt;4)]-N-acetyl-alpha-D-muramoyl-L-alanyl-D-glutamyl-meso-2,6-diaminopimeloyl-D-alanyl-D-alanine + UDP + H(+). Its pathway is cell wall biogenesis; peptidoglycan biosynthesis. Its function is as follows. Cell wall formation. Catalyzes the transfer of a GlcNAc subunit on undecaprenyl-pyrophosphoryl-MurNAc-pentapeptide (lipid intermediate I) to form undecaprenyl-pyrophosphoryl-MurNAc-(pentapeptide)GlcNAc (lipid intermediate II). This chain is UDP-N-acetylglucosamine--N-acetylmuramyl-(pentapeptide) pyrophosphoryl-undecaprenol N-acetylglucosamine transferase, found in Streptomyces collinus.